A 103-amino-acid polypeptide reads, in one-letter code: Small ribosomal subunit protein uS10 (103 aa).

The protein belongs to the universal ribosomal protein uS10 family. Part of the 30S ribosomal subunit.

Involved in the binding of tRNA to the ribosomes. The sequence is that of Small ribosomal subunit protein uS10 from Ruthia magnifica subsp. Calyptogena magnifica.